We begin with the raw amino-acid sequence, 186 residues long: Ribonuclease M5 (186 aa).

The Toprim domain maps to serine 6–proline 89. Residues glutamate 12, aspartate 58, and aspartate 60 each coordinate Mg(2+).

This sequence belongs to the ribonuclease M5 family. Mg(2+) is required as a cofactor.

The protein localises to the cytoplasm. The catalysed reaction is Endonucleolytic cleavage of RNA, removing 21 and 42 nucleotides, respectively, from the 5'- and 3'-termini of a 5S-rRNA precursor.. In terms of biological role, required for correct processing of both the 5' and 3' ends of 5S rRNA precursor. Cleaves both sides of a double-stranded region yielding mature 5S rRNA in one step. The sequence is that of Ribonuclease M5 from Streptococcus pneumoniae (strain ATCC BAA-255 / R6).